Here is a 365-residue protein sequence, read N- to C-terminus: Nudix hydrolase 24, chloroplastic (365 aa).

Residues 1 to 30 (MASAFCSLCPTPTSLFSSHALIPTLQWRSS) constitute a chloroplast transit peptide. The Nudix hydrolase domain occupies 196–337 (GYAIHVNGYV…KDSCSLVIID (142 aa)). A Nudix box motif is present at residues 235–256 (GGLPHGISVCENLVKECEEEAG). 2 residues coordinate Mg(2+): Glu250 and Glu254.

This sequence belongs to the Nudix hydrolase family. Mg(2+) serves as cofactor. Requires Mn(2+) as cofactor. In terms of tissue distribution, expressed in leaves.

Its subcellular location is the plastid. The protein localises to the chloroplast. Functionally, probably mediates the hydrolysis of some nucleoside diphosphate derivatives. The protein is Nudix hydrolase 24, chloroplastic (NUDT24) of Arabidopsis thaliana (Mouse-ear cress).